Consider the following 322-residue polypeptide: Transcription factor Atoh8 (322 aa).

Disordered regions lie at residues 77–96 (PVPA…DTAR), 101–144 (IRAP…EAHS), and 159–221 (PPAR…ATAA). The span at 101 to 111 (IRAPEVSDARK) shows a compositional bias: basic and acidic residues. A basic motif; degenerate region spans residues 231 to 244 (TRRLLANARERTRV). Positions 231–283 (TRRLLANARERTRVHTISAAFEALRKQVPCYSYGQKLSKLAILRIACNYILSL) constitute a bHLH domain. Residues 245–283 (HTISAAFEALRKQVPCYSYGQKLSKLAILRIACNYILSL) are helix-loop-helix motif.

Efficient DNA binding requires dimerization with another bHLH protein. Interacts with NEUROG3 and NEUROD1. Interacts with ZFPM2; mediates indirect interaction with GATA4. Forms a heterodimer with TCF3; repress transcription of TCF3 and TCF3/NEUROG3 dimer-induced transactivation of E box-dependent promoters. Expressed by subsets of mature neurons. Expressed in kidney (podocytes). Expression is restricted to the atria, lung mesenchyme, and vascular smooth muscle.

The protein localises to the nucleus. It localises to the nucleus speckle. It is found in the cytoplasm. Transcription factor that binds a palindromic (canonical) core consensus DNA sequence 5'-CANNTG- 3' known as an E-box element, possibly as a heterodimer with other bHLH proteins. Regulates endothelial cell proliferation, migration and tube-like structures formation. Modulates endothelial cell differentiation through NOS3. May be implicated in specification and differentiation of neuronal cell lineages in the brain. May participate in kidney development and may be involved in podocyte differentiation. During early embryonic development is involved in tissue-specific differentiation processes that are dependent on class II bHLH factors and namely modulates the differentiation program initiated by the pro-endocrine factor NEUROG3. During myogenesis, may play a role during the transition of myoblasts from the proliferative phase to the differentiation phase. Positively regulates HAMP transcription in two ways, firstly by acting directly on the HAMP promoter via E-boxes binding and indirectly through increased phosphorylation of SMAD protein complex. Repress NEUROG3-dependent gene activation in a gene-specific manner through at least two mechanisms; requires only either the sequestering of a general partner such as TCF3 through heterodimerization, either also requires binding of the bHLH domain to DNA via a basic motif. The sequence is that of Transcription factor Atoh8 from Mus musculus (Mouse).